The chain runs to 394 residues: Probable purine permease 8 (394 aa).

The next 10 helical transmembrane spans lie at 45–65, 77–97, 113–133, 139–159, 172–192, 208–228, 247–267, 289–309, 315–335, and 344–364; these read WLRI…STIL, TWMG…FRFF, FSSF…VSAN, VGLL…QLAF, FTPF…LLVV, VIGI…LSLV, LVAY…FASG, TLAS…GLIF, FSNS…VIVF, and IFSI…HYLD. The tract at residues 373-394 is disordered; it reads TSPVGDPHLLPAEEGHTNIHSV. Residues 383–394 are compositionally biased toward basic and acidic residues; it reads PAEEGHTNIHSV.

The protein belongs to the purine permeases (TC 2.A.7.14) family.

Its subcellular location is the membrane. In Arabidopsis thaliana (Mouse-ear cress), this protein is Probable purine permease 8 (PUP8).